A 176-amino-acid polypeptide reads, in one-letter code: MAAKNLPKVFFDVAVNGKPSGRLTFKLFSDTVPKTAENFRALCTGEKGTGVSGKPLHYKGSHFHRIIPGFMAQGGDFTMGNGRGGESIYGHKFNDENFTLKHTGKGVLSMANAGPNTNGSQFFITFDKTPWLDGNHTVFGQLVEGNQVLEILEQHGTQSGMPTAKVEIVDCGEIKN.

The region spanning Phe10–Glu173 is the PPIase cyclophilin-type domain.

This sequence belongs to the cyclophilin-type PPIase family.

It catalyses the reaction [protein]-peptidylproline (omega=180) = [protein]-peptidylproline (omega=0). PPIases accelerate the folding of proteins. It catalyzes the cis-trans isomerization of proline imidic peptide bonds in oligopeptides. The protein is Peptidyl-prolyl cis-trans isomerase cyp5 (cyp5) of Rhizopus delemar (strain RA 99-880 / ATCC MYA-4621 / FGSC 9543 / NRRL 43880) (Mucormycosis agent).